The chain runs to 773 residues: Beta-D-xylosidase 3 (773 aa).

An N-terminal signal peptide occupies residues 1–23 (MASRNRALFSVSTLFLCFIVCIS). Asn-131 carries an N-linked (GlcNAc...) asparagine glycan. The active site involves Asp-298. Asn-349, Asn-432, and Asn-770 each carry an N-linked (GlcNAc...) asparagine glycan.

Belongs to the glycosyl hydrolase 3 family. In terms of tissue distribution, expressed in flowers and siliques, in the early stage of seed formation and not at seed maturation. Detected exclusively in the endosperm of very young seeds when the embryo is at the globular stage.

The protein localises to the secreted. Its subcellular location is the extracellular space. It is found in the extracellular matrix. It catalyses the reaction Hydrolysis of terminal non-reducing alpha-L-arabinofuranoside residues in alpha-L-arabinosides.. Involved in the hydrolysis of arabinan. Can hydrolyze (1,3)-alpha-, (1,2)-alpha-linked side group residues and non-reducing terminal L-arabinofuranose residues of debranched (1,5)-alpha-L-arabinan backbone. Also acts as a beta-D-xylosidase, releasing D-xylose from arabinoxylan and xylan. In Arabidopsis thaliana (Mouse-ear cress), this protein is Beta-D-xylosidase 3 (BXL3).